A 432-amino-acid polypeptide reads, in one-letter code: Glutamate-1-semialdehyde 2,1-aminomutase (432 aa).

An N6-(pyridoxal phosphate)lysine modification is found at lysine 271.

It belongs to the class-III pyridoxal-phosphate-dependent aminotransferase family. HemL subfamily. In terms of assembly, homodimer. Pyridoxal 5'-phosphate serves as cofactor.

It localises to the cytoplasm. The catalysed reaction is (S)-4-amino-5-oxopentanoate = 5-aminolevulinate. Its pathway is porphyrin-containing compound metabolism; protoporphyrin-IX biosynthesis; 5-aminolevulinate from L-glutamyl-tRNA(Glu): step 2/2. This is Glutamate-1-semialdehyde 2,1-aminomutase from Protochlamydia amoebophila (strain UWE25).